We begin with the raw amino-acid sequence, 483 residues long: METIHNISNRLQEVLATNKSVNVDTDNDSLSSNQEDNEVEKVRHLVVILGEKYSYAVDRNTGINALMQWFTTNSEIPEEILNAIRSKLNFTYRTNFEPIERAPDGPSPINPLIMLRINPIDAIENVFNNRECFFTDVGWGCMIRTGQSLLGNALQRVKSTVKDQPYIYEMDDTKEITDLFKDNTKSAFSLQNFVKCGRIYNKIAPGEWFGPATTATCIRYLIQENPCYGIEACYISVSSGDIFKENIQGMIDRYPNGNILILLGIKLGLDSVHERYWGEIKTMLESPFSVGIAGGRPSSSLYFFGYFDDTLLFFDPHNSQTALIDDFDESCHTENFGKLNFSDLDPSMLLGFLLPCSKWDEFQEFTSLLTIVNVLDGMDQYRDPDLNSNDIGNVELSPQLKLSQTPDAITDDDYVDIGALIQGNSMNINDRDNGYQEVQCKNQQIVIMDSLNETKPLEIEKVLVGQGTNLVNATTPCREAFPK.

The Nucleophile role is filled by C141. Active-site residues include D315 and H317.

This sequence belongs to the peptidase C54 family.

The protein resides in the cytoplasm. It localises to the nucleus. It is found in the preautophagosomal structure. The enzyme catalyses [protein]-C-terminal L-amino acid-glycyl-phosphatidylethanolamide + H2O = [protein]-C-terminal L-amino acid-glycine + a 1,2-diacyl-sn-glycero-3-phosphoethanolamine. Cysteine protease that plays a key role in cytoplasm to vacuole transport (Cvt) and autophagy by mediating both proteolytic activation and delipidation of ATG8. Required for selective autophagic degradation of the nucleus (nucleophagy) as well as for mitophagy which contributes to regulate mitochondrial quantity and quality by eliminating the mitochondria to a basal level to fulfill cellular energy requirements and preventing excess ROS production. The protease activity is required for proteolytic activation of ATG8: cleaves the C-terminal amino acid of ATG8 to reveal a C-terminal glycine. ATG8 ubiquitin-like activity requires the exposure of the glycine at the C-terminus for its conjugation to phosphatidylethanolamine (PE) and its insertion to membranes, which is necessary for autophagy. The ATG8-PE conjugate mediates tethering between adjacent membranes and stimulates membrane hemifusion, leading to expansion of the autophagosomal membrane during autophagy. In addition to the protease activity, also catalyzes deconjugation of PE-conjugated forms of ATG8 during macroautophagy: ATG8 delipidation is required to release the protein from membranes, which facilitates multiple events during macroautophagy, and especially for efficient autophagosome biogenesis, the assembly of ATG9-containing tubulovesicular clusters into phagophores/autophagosomes, and for the disassembly of PAS-associated ATG components. ATG8 delipidation by ATG4 also recycles ATG8-PE generated on inappropriate membranes to maintain a reservoir of unlipidated ATG8 that is required for autophagosome formation at the PAS. The protein is Probable cysteine protease ATG4 (ATG4) of Candida glabrata (strain ATCC 2001 / BCRC 20586 / JCM 3761 / NBRC 0622 / NRRL Y-65 / CBS 138) (Yeast).